The following is a 781-amino-acid chain: Envelope glycoprotein (781 aa).

The Extracellular segment spans residues 1-597 (MMEEGRKEEP…SFTWGSWVDK (597 aa)). Residues N189, N212, N241, N266, N285, N301, N309, and N382 are each glycosylated (N-linked (GlcNAc...) asparagine; by host). The interval 423 to 443 (AVGMVIFLLVLAIMAMTASVT) is fusion peptide. N-linked (GlcNAc...) asparagine; by host glycosylation occurs at N464. The tract at residues 482–498 (LNTRVNNLHHRVTYLEF) is immunosuppression. N-linked (GlcNAc...) asparagine; by host glycosylation is found at N530, N535, and N559. Residues 598 to 618 (LVWLAYILLAYFAFKVLQCIM) form a helical membrane-spanning segment. Residues 619–781 (SNLGAQTRYQ…PEEGIRPVEM (163 aa)) are Cytoplasmic-facing. A compositionally biased stretch (acidic residues) spans 634–644 (EDTDPAGDGDQ). Residues 634-666 (EDTDPAGDGDQPDDHRSGDTPRSGVPSGGWSQK) are disordered.

In terms of assembly, the mature envelope protein (Env) consists of a trimer of SU-TM heterodimers attached by non-covalent interactions or by a labile interchain disulfide bond. Post-translationally, specific enzymatic cleavages in vivo yield mature proteins. Envelope glycoproteins are synthesized as an inactive precursor that is N-glycosylated and processed likely by host cell furin or by a furin-like protease in the Golgi to yield the mature SU and TM proteins. The cleavage site between SU and TM requires the minimal sequence [KR]-X-[KR]-R.

The protein resides in the virion membrane. It is found in the host cell membrane. Its function is as follows. The surface protein (SU) attaches the virus to the host cell by binding to its receptor. This interaction triggers the refolding of the transmembrane protein (TM) and is thought to activate its fusogenic potential by unmasking its fusion peptide. Fusion occurs at the host cell plasma membrane. In terms of biological role, the transmembrane protein (TM) acts as a class I viral fusion protein. Under the current model, the protein has at least 3 conformational states: pre-fusion native state, pre-hairpin intermediate state, and post-fusion hairpin state. During viral and target cell membrane fusion, the coiled coil regions (heptad repeats) assume a trimer-of-hairpins structure, positioning the fusion peptide in close proximity to the C-terminal region of the ectodomain. The formation of this structure appears to drive apposition and subsequent fusion of viral and target cell membranes. Membranes fusion leads to delivery of the nucleocapsid into the cytoplasm. This is Envelope glycoprotein (env) from Bos javanicus (Wild banteng).